The chain runs to 244 residues: Probable transcriptional regulatory protein CBU_1566 (244 aa).

Belongs to the TACO1 family.

Its subcellular location is the cytoplasm. The sequence is that of Probable transcriptional regulatory protein CBU_1566 from Coxiella burnetii (strain RSA 493 / Nine Mile phase I).